Here is a 536-residue protein sequence, read N- to C-terminus: Phosphoenolpyruvate carboxykinase (ATP) (536 aa).

Substrate contacts are provided by Arg-61, Tyr-195, and Lys-201. Residues Lys-201, His-220, and 236–244 (GLSGTGKTT) each bind ATP. The Mn(2+) site is built by Lys-201 and His-220. Asp-257 contributes to the Mn(2+) binding site. ATP-binding residues include Glu-285, Arg-322, and Thr-447. Arg-322 provides a ligand contact to substrate.

Belongs to the phosphoenolpyruvate carboxykinase (ATP) family. Mn(2+) serves as cofactor.

It is found in the cytoplasm. The enzyme catalyses oxaloacetate + ATP = phosphoenolpyruvate + ADP + CO2. It participates in carbohydrate biosynthesis; gluconeogenesis. In terms of biological role, involved in the gluconeogenesis. Catalyzes the conversion of oxaloacetate (OAA) to phosphoenolpyruvate (PEP) through direct phosphoryl transfer between the nucleoside triphosphate and OAA. This is Phosphoenolpyruvate carboxykinase (ATP) from Rhizobium rhizogenes (strain K84 / ATCC BAA-868) (Agrobacterium radiobacter).